A 690-amino-acid polypeptide reads, in one-letter code: Glycine--tRNA ligase beta subunit (690 aa).

It belongs to the class-II aminoacyl-tRNA synthetase family. In terms of assembly, tetramer of two alpha and two beta subunits.

The protein resides in the cytoplasm. The catalysed reaction is tRNA(Gly) + glycine + ATP = glycyl-tRNA(Gly) + AMP + diphosphate. The chain is Glycine--tRNA ligase beta subunit from Syntrophus aciditrophicus (strain SB).